The primary structure comprises 630 residues: MIRPGKVLVLNFLKRSLSNLATFKGSEINTKKYDLKLPNNSDSNKQYFTLDEKLKVIQYTDANEESIIDEFILPLSSGAKASDTYQKTNLSKMRNLLTTFHIDEGESLPLSKPGYIKETPFEYHSKYNSDTSYVSIPRLSVTKLLTFQWCELREFYTIFSGSPVKKETKEMKLGTEAHLKLELETHNLIDVEDIERITDEFVEKKIDSSKRHINTLADPDDILLAKDDLSKLTELLHGAIPESSMANEWMSKIISRLFTLINTSEAREVLVHGYLDFQTSHFTSNLHDFQLNQSNLVLVSGVVDYLKLFNPHDKTDYSMFEDIQDHVEFTYSSQRKHQWIDLSQFLKDIDPIIKEYSDTYKIAITDVKTRSWNKLPQQESVLQAAKLQVEYYRNMFGILAGEFDDIEIGYEMLLENAKRRNLDVDKPISIKSALALLKANHTIILKDYVKLANGEAIGFESFDRFSQERYLNQGSEYDFTKVLEGTNREDYISQIKASDKDGFDFDEILTSDILKAWKIPLTLRYFAARSSQLFHLCKPFLSDSLSIEYHNVKKNDQCFHTNYYNYNANEIDEVTAKASAFWNGTRPPIPVQDLSKCNYCDFSSRCVIPNPHKNVPGSYGSVGSKMKHFI.

The transit peptide at 1–24 (MIRPGKVLVLNFLKRSLSNLATFK) directs the protein to the mitochondrion. C150, C597, C600, and C606 together coordinate [4Fe-4S] cluster.

Belongs to the EXO5 family. As to quaternary structure, monomer. Mg(2+) serves as cofactor. The cofactor is [4Fe-4S] cluster.

The protein localises to the mitochondrion. In terms of biological role, single strand DNA specific 5' exonuclease involved in mitochondrial DNA replication and recombination. Releases dinucleotides as main products of catalysis. Has the capacity to slide across 5'double-stranded DNA or 5'RNA sequences and resumes cutting two nucleotides downstream of the double-stranded-to-single-stranded junction or RNA-to-DNA junction, respectively. The sequence is that of Exonuclease V, mitochondrial (EXO5) from Debaryomyces hansenii (strain ATCC 36239 / CBS 767 / BCRC 21394 / JCM 1990 / NBRC 0083 / IGC 2968) (Yeast).